A 337-amino-acid chain; its full sequence is Visual pigment-like receptor peropsin (337 aa).

The Extracellular segment spans residues 1–26 (MLRNNLGNSSDSKNEDGSVFSQTEHN). Asparagine 8 carries N-linked (GlcNAc...) asparagine glycosylation. The chain crosses the membrane as a helical span at residues 27-49 (IVATYLIMAGMISIISNIIVLGI). Topologically, residues 50 to 61 (FIKYKELRTPTN) are cytoplasmic. Residues 62–87 (AIIINLAVTDIGVSSIGYPMSAASDL) traverse the membrane as a helical segment. The Extracellular portion of the chain corresponds to 88–101 (YGSWKFGYAGCQVY). The cysteines at positions 98 and 175 are disulfide-linked. Residues 102 to 121 (AGLNIFFGMASIGLLTVVAV) form a helical membrane-spanning segment. Topologically, residues 122-140 (DRYLTICLPDVGRRMTTNT) are cytoplasmic. A helical membrane pass occupies residues 141–164 (YIGLILGAWINGLFWALMPIIGWA). The Extracellular segment spans residues 165-188 (SYAPDPTGATCTINWRKNDRSFVS). Residues 189–212 (YTMTVIAINFIVPLTVMFYCYYHV) form a helical membrane-spanning segment. Residues 213–240 (TLSIKHHTTSDCTESLNRDWSDQIDVTK) lie on the Cytoplasmic side of the membrane. The helical transmembrane segment at 241–264 (MSVIMICMFLVAWSPYSIVCLWAS) threads the bilayer. The Extracellular segment spans residues 265–272 (FGDPKKIP). The chain crosses the membrane as a helical span at residues 273-297 (PPMAIIAPLFAKSSTFYNPCIYVVA). Lysine 284 carries the N6-(retinylidene)lysine modification. At 298 to 337 (NKKFRRAMLAMFKCQTHQTMPVTSILPMDVSQNPLASGRI) the chain is on the cytoplasmic side.

It belongs to the G-protein coupled receptor 1 family. Opsin subfamily. In terms of tissue distribution, found only in the eye, where it is localized to the retinal pigment epithelium (RPE). In the RPE, it is localized to the microvilli that surround the photoreceptor outer segments.

It localises to the membrane. May play a role in rpe physiology either by detecting light directly or by monitoring the concentration of retinoids or other photoreceptor-derived compounds. The chain is Visual pigment-like receptor peropsin (RRH) from Homo sapiens (Human).